An 84-amino-acid chain; its full sequence is ATP synthase subunit c (84 aa).

2 helical membrane passes run 10–30 (IAVG…FALL) and 53–73 (FIIA…ALLF).

This sequence belongs to the ATPase C chain family. In terms of assembly, F-type ATPases have 2 components, F(1) - the catalytic core - and F(0) - the membrane proton channel. F(1) has five subunits: alpha(3), beta(3), gamma(1), delta(1), epsilon(1). F(0) has three main subunits: a(1), b(2) and c(10-14). The alpha and beta chains form an alternating ring which encloses part of the gamma chain. F(1) is attached to F(0) by a central stalk formed by the gamma and epsilon chains, while a peripheral stalk is formed by the delta and b chains.

It localises to the cell inner membrane. F(1)F(0) ATP synthase produces ATP from ADP in the presence of a proton or sodium gradient. F-type ATPases consist of two structural domains, F(1) containing the extramembraneous catalytic core and F(0) containing the membrane proton channel, linked together by a central stalk and a peripheral stalk. During catalysis, ATP synthesis in the catalytic domain of F(1) is coupled via a rotary mechanism of the central stalk subunits to proton translocation. Functionally, key component of the F(0) channel; it plays a direct role in translocation across the membrane. A homomeric c-ring of between 10-14 subunits forms the central stalk rotor element with the F(1) delta and epsilon subunits. The chain is ATP synthase subunit c from Vibrio alginolyticus.